We begin with the raw amino-acid sequence, 1162 residues long: Leptin receptor (1162 aa).

The signal sequence occupies residues 1-21; sequence MMCQKFYVVLLHWEFLYVIAA. Over 22 to 839 the chain is Extracellular; sequence LNLAYPISPW…AIDKQQNDAG (818 aa). 5 cysteine pairs are disulfide-bonded: C37–C90, C89–C99, C131–C142, C186–C195, and C188–C193. N41, N56, N73, and N98 each carry an N-linked (GlcNAc...) asparagine glycan. N187 carries an N-linked (GlcNAc...) asparagine glycan. Positions 238 to 331 constitute a Fibronectin type-III 1 domain; the sequence is PPLGLHMEVT…SPQVFTTQDV (94 aa). N275 and N345 each carry an N-linked (GlcNAc...) asparagine glycan. Residues 329 to 427 enclose the Ig-like domain; the sequence is QDVVYFPPKI…HRYAELYVID (99 aa). Intrachain disulfides connect C350/C410 and C411/C416. N431 carries an N-linked (GlcNAc...) asparagine glycan. Cystine bridges form between C434-C445, C471-C526, and C486-C496. Residues 465-482 are leptin-binding; the sequence is HRRSLYCPDSPSIHPTSE. N-linked (GlcNAc...) asparagine glycans are attached at residues N514, N622, N657, N668, N686, N695, N698, and N726. Fibronectin type-III domains lie at 537–632, 637–729, and 738–832; these read PPSN…TLVM, PMRG…NLTF, and AVES…DAID. The WSXWS motif motif lies at 620-624; the sequence is WSNWS. Residues 840 to 860 traverse the membrane as a helical segment; it reads LYVIVPIIISSCVLLLGTLLI. Residues 861-1162 are Cytoplasmic-facing; it reads SHQRMKKLFW…MENKMCDLTV (302 aa). The Box 1 motif signature appears at 869–877; sequence FWDDVPNPK. Residue S880 is modified to Phosphoserine. A required for JAK2 activation region spans residues 891–896; that stretch reads ETFEHL. The interval 896–904 is required for STAT3 phosphorylation; sequence LFTKHAESV. Y985 bears the Phosphotyrosine; by JAK2 mark. The residue at position 1077 (Y1077) is a Phosphotyrosine. Phosphotyrosine; by JAK2 is present on Y1138.

This sequence belongs to the type I cytokine receptor family. Type 2 subfamily. As to quaternary structure, present as a mixture of monomers and dimers. The phosphorylated receptor binds a number of SH2 domain-containing proteins such as JAK2, STAT3, PTPN11, and SOCS3. Interaction with SOCS3 inhibits JAK/STAT signaling and MAPK cascade. In terms of processing, on ligand binding, phosphorylated on two conserved C-terminal tyrosine residues (isoform B only) by JAK2. Tyr-985 is required for complete binding and activation of PTPN11, ERK/FOS activation,for interaction with SOCS3 and SOCS3 mediated inhibition of leptin signaling. Phosphorylation on Tyr-1138 is required for STAT3 binding/activation. Phosphorylation of Tyr-1077 has a more accessory role. As to expression, isoform A: highest level of expression in lung and kidney, also present in heart, brain, spleen, liver, muscle, choroid plexus and hypothalamus. Isoform B: highest levels of expression in hypothalamus and lower levels in brain, testes and adipose tissue. Expressed by neurons of the parabrachial nucleus. Expressed by peripheral blood mononuclear cells and CD4(+) T-cells. Isoform E: expressed in adipose tissue, liver, hypothalamus, cerebral microvessels, heart, and testes.

The protein resides in the cell membrane. Its subcellular location is the basolateral cell membrane. The protein localises to the secreted. Its function is as follows. Receptor for hormone LEP/leptin. On ligand binding, mediates LEP central and peripheral effects through the activation of different signaling pathways such as JAK2/STAT3 and MAPK cascade/FOS. In the hypothalamus, LEP acts as an appetite-regulating factor that induces a decrease in food intake and an increase in energy consumption by inducing anorexinogenic factors and suppressing orexigenic neuropeptides, also regulates bone mass and secretion of hypothalamo-pituitary-adrenal hormones. In the periphery, increases basal metabolism, influences reproductive function, regulates pancreatic beta-cell function and insulin secretion, is pro-angiogenic and affects innate and adaptive immunity. Control of energy homeostasis and melanocortin production (stimulation of POMC and full repression of AgRP transcription) is mediated by STAT3 signaling, whereas distinct signals regulate NPY and the control of fertility, growth and glucose homeostasis. Involved in the regulation of counter-regulatory response to hypoglycemia by inhibiting neurons of the parabrachial nucleus. Has a specific effect on T lymphocyte responses, differentially regulating the proliferation of naive and memory T-cells. Leptin increases Th1 and suppresses Th2 cytokine production. In terms of biological role, may transport LEP across the blood-brain barrier. Binds LEP and mediates LEP endocytosis. Does not induce phosphorylation of and activate STAT3. Antagonizes Isoform A and isoform B-mediated LEP binding and endocytosis. In Mus musculus (Mouse), this protein is Leptin receptor (Lepr).